We begin with the raw amino-acid sequence, 406 residues long: CinA-like protein (406 aa).

The protein belongs to the CinA family.

This is CinA-like protein from Deinococcus geothermalis (strain DSM 11300 / CIP 105573 / AG-3a).